Consider the following 99-residue polypeptide: Malonate decarboxylase acyl carrier protein (99 aa).

Ser-25 is subject to O-(phosphoribosyl dephospho-coenzyme A)serine.

In terms of processing, covalently binds the prosthetic group of malonate decarboxylase.

It is found in the cytoplasm. Its function is as follows. Subunit of malonate decarboxylase, it is an acyl carrier protein to which acetyl and malonyl thioester residues are bound via a 2'-(5''-phosphoribosyl)-3'-dephospho-CoA prosthetic group and turn over during the catalytic mechanism. The sequence is that of Malonate decarboxylase acyl carrier protein (mdcC) from Klebsiella pneumoniae.